Consider the following 154-residue polypeptide: Ribosomal RNA large subunit methyltransferase H (154 aa).

S-adenosyl-L-methionine is bound by residues Leu70, Gly102, and Leu121–Phe126.

Belongs to the RNA methyltransferase RlmH family. As to quaternary structure, homodimer.

Its subcellular location is the cytoplasm. It carries out the reaction pseudouridine(1915) in 23S rRNA + S-adenosyl-L-methionine = N(3)-methylpseudouridine(1915) in 23S rRNA + S-adenosyl-L-homocysteine + H(+). Functionally, specifically methylates the pseudouridine at position 1915 (m3Psi1915) in 23S rRNA. The protein is Ribosomal RNA large subunit methyltransferase H of Geobacter metallireducens (strain ATCC 53774 / DSM 7210 / GS-15).